The sequence spans 60 residues: UPF0434 protein YcaR (60 aa).

It belongs to the UPF0434 family.

The protein is UPF0434 protein YcaR of Salmonella arizonae (strain ATCC BAA-731 / CDC346-86 / RSK2980).